Here is a 247-residue protein sequence, read N- to C-terminus: Fasciclin-like arabinogalactan protein 13 (247 aa).

An N-terminal signal peptide occupies residues 1–25 (MATTPLLLLLLTAVFLSTEITAQRA). The FAS1 domain maps to 34–179 (PINITAILEK…LAVYVVDMVL (146 aa)). 5 N-linked (GlcNAc...) asparagine glycosylation sites follow: asparagine 36, asparagine 55, asparagine 68, asparagine 141, and asparagine 150. Positions 189-228 (KISPMAPPPKSKSPDVSDDSESSKKAAAPSESEKSGSGEM) are disordered. A lipid anchor (GPI-anchor amidated glycine) is attached at glycine 224. Positions 225–247 (SGEMNTGLGLGLGLVVLCLKFLL) are cleaved as a propeptide — removed in mature form.

The protein belongs to the fasciclin-like AGP family.

It localises to the cell membrane. Functionally, may be a cell surface adhesion protein. The chain is Fasciclin-like arabinogalactan protein 13 (FLA13) from Arabidopsis thaliana (Mouse-ear cress).